The sequence spans 940 residues: Acetyl-coenzyme A synthetase (940 aa).

The N-terminal stretch at 1-33 (MCCAIWSASRAPACSASQLSSSHAVRPSVVPDA) is a signal peptide. Residues 1 to 289 (MCCAIWSASR…VQRSVTRLTA (289 aa)) form a unknown region. Disordered stretches follow at residues 70–127 (TARA…RPRC), 157–202 (VAPP…ADSA), and 224–274 (ASSQ…QQTC). 2 stretches are compositionally biased toward polar residues: residues 72–95 (RATT…TAAS) and 107–120 (SSIS…TSGS). Composition is skewed to low complexity over residues 184-202 (TAPP…ADSA) and 224-245 (ASSQ…SGRS). Residues 258 to 274 (SSPTVQRNQTTVHQQTC) show a composition bias toward polar residues. The acetyl-coenzyme A synthetase stretch occupies residues 290–940 (MSNPSHAEVP…SVFEAIRASK (651 aa)). Residues 480-483 (RRGK) and Thr-599 each bind CoA. Residues 675 to 677 (GEP), 699 to 704 (DTWWQT), Asp-796, and Arg-811 each bind ATP. Position 819 (Ser-819) interacts with CoA. Arg-822 provides a ligand contact to ATP. Positions 833, 835, and 838 each coordinate Mg(2+). Residue Lys-906 is modified to N6-acetyllysine.

The protein belongs to the ATP-dependent AMP-binding enzyme family. It depends on Mg(2+) as a cofactor. Post-translationally, acetylated on Lys-906 by Pat in the presence of acetyl-CoA as an acetyl donor and ATP. Acetylation results in the inactivation of the enzyme. Deacetylation by the SIR2-homolog deacetylase CobB is required to activate the enzyme.

The catalysed reaction is acetate + ATP + CoA = acetyl-CoA + AMP + diphosphate. Its function is as follows. Catalyzes the conversion of acetate into acetyl-CoA (AcCoA), an essential intermediate at the junction of anabolic and catabolic pathways. AcsA undergoes a two-step reaction. In the first half reaction, AcsA combines acetate with ATP to form acetyl-adenylate (AcAMP) intermediate. In the second half reaction, it can then transfer the acetyl group from AcAMP to the sulfhydryl group of CoA, forming the product AcCoA. This chain is Acetyl-coenzyme A synthetase (acsA), found in Mycolicibacterium smegmatis (strain ATCC 700084 / mc(2)155) (Mycobacterium smegmatis).